The primary structure comprises 697 residues: MMRPVVVKEKRVNESQIHAVEDEVRQAKTMDRDIVTHAMKQSFAKLNPKVMIKNPIMFVVEIGFIITLILSFLPSSSSSVPGWFNITVSLILLFTVLFANFAEALAEGRGKAQADSLKQSKKDVFANVVKENGDIVQVSATDLRKGDIVIVKQGEMIPNDGEVIKGLASVDESAITGESAPVIKEAGGDFCSVTGGTMVVSDEITIVITSNPGESFIDKMISLVEGAARQKTPNEIALNTVLTSLTLIFLIVVVTLPIFTNYLGFQIDTAVLVALLVCLIPTTIGGLLSAIGIAGMDRVTKFNVLAMSGKAVEAAGDINTIILDKTGTITFGNRMAHTLLPVGNETIEQVGKWAAISSVLDETPEGRSVIEYVQTKSISYNREIAEQGEFVPFKAETRMSGVDLQDGTKVRKGAVGAVIEWVQSQGGMIPKDVNQKADLISKEGGTPLVVAVDNRIYGLIYLKDTVKPGMRERFEQLRQMGIKTVMCTGDNPLTAATIAKEAGVDEFVAECKPEDKIAVIKAEQDKGKLVAMTGDGTNDAPALAQADVGLAMNSGTTAAKEAANMIDLDSNPTKIIEVVGIGKQLLMTRGALTTFSIANDIAKYFAIIPAMFTLAIPQMEALNIMKLTSPLSAILSALIFNAVIIPLLIPLAMKGIAYKPMSSNALLSRNLLIYGLGGVIVPFIGIKVIDMIVGLFI.

The next 4 helical transmembrane spans lie at 55–75 (PIMFVVEIGFIITLILSFLPS), 82–102 (GWFNITVSLILLFTVLFANFA), 245–265 (LTLIFLIVVVTLPIFTNYLGF), and 271–291 (VLVALLVCLIPTTIGGLLSAI). The active-site 4-aspartylphosphate intermediate is D324. ATP is bound by residues D361, E365, 393 to 400 (FKAETRMS), and K412. Positions 535 and 539 each coordinate Mg(2+). The next 3 helical transmembrane spans lie at 605–625 (FAIIPAMFTLAIPQMEALNIM), 633–653 (AILSALIFNAVIIPLLIPLAM), and 677–697 (GGVIVPFIGIKVIDMIVGLFI).

It belongs to the cation transport ATPase (P-type) (TC 3.A.3) family. Type IA subfamily. In terms of assembly, the system is composed of three essential subunits: KdpA, KdpB and KdpC.

It localises to the cell membrane. The enzyme catalyses K(+)(out) + ATP + H2O = K(+)(in) + ADP + phosphate + H(+). Its function is as follows. Part of the high-affinity ATP-driven potassium transport (or Kdp) system, which catalyzes the hydrolysis of ATP coupled with the electrogenic transport of potassium into the cytoplasm. This subunit is responsible for energy coupling to the transport system and for the release of the potassium ions to the cytoplasm. The chain is Potassium-transporting ATPase ATP-binding subunit from Bacillus mycoides (strain KBAB4) (Bacillus weihenstephanensis).